Here is a 498-residue protein sequence, read N- to C-terminus: Cytochrome P450 monooxygenase 110 (498 aa).

A helical transmembrane segment spans residues tyrosine 7 to serine 24. The N-linked (GlcNAc...) asparagine glycan is linked to asparagine 425. Residue cysteine 440 coordinates heme.

This sequence belongs to the cytochrome P450 family. The cofactor is heme.

It is found in the membrane. It participates in secondary metabolite biosynthesis. Cytochrome P450 monooxygenase that is able to use dehydroabietic acid and testosterone as substrates for oxidation, suggesting that the natural substrate(s) may be structurally related to steroid compounds. The chain is Cytochrome P450 monooxygenase 110 from Postia placenta (strain ATCC 44394 / Madison 698-R) (Brown rot fungus).